Here is a 637-residue protein sequence, read N- to C-terminus: MAQSTTTSPDGGTTFEHLWSSLEPDSTYFDLPQSSRGNNEVVGGTDSSMDVFHLEGMTTSVMAQFNLLSSTMDQMSSRAASASPYTPEHAASVPTHSPYAQPSSTFDTMSPAPVIPSNTDYPGPHHFEVTFQQSSTAKSATWTYSPLLKKLYCQIAKTCPIQIKVSAPPPPGTAIRAMPVYKKAEHVTDIVKRCPNHELGRDFNEGQSAPASHLIRVEGNNLSQYVDDPVTGRQSVVVPYEPPQVGTEFTTILYNFMCNSSCVGGMNRRPILIIITLETRDGQVLGRRSFEGRICACPGRDRKADEDHYREQQALNESSAKNGAASKRAFKQSPPAVPALGPGVKKRRHGDEDTYYLQVRGRENFEILMKLKESLELMELVPQPLVDSYRQQQQLLQRPSHLQPPSYGPVLSPMNKVHGGVNKLPSVNQLVGQPPPHSSAATPNLGPVGSGMLNNHGHAVPANSEMTSSHGTQSMVSGSHCTPPPPYHADPSLVSFLTGLGCPNCIEYFTSQGLQSIYHLQNLTIEDLGALKIPEQYRMTIWRGLQDLKQGHDYGAAAQQLLRSSNAAAISIGGSGELQRQRVMEAVHFRVRHTITIPNRGGPGAGPDEWADFGFDLPDCKARKQPIKEEFTEAEIH.

Positions 1-46 (MAQSTTTSPDGGTTFEHLWSSLEPDSTYFDLPQSSRGNNEVVGGTD) are transactivation. Thr27 is subject to Phosphothreonine. Tyr28 bears the Phosphotyrosine; by SRC and HCK mark. The disordered stretch occupies residues 78-104 (RAASASPYTPEHAASVPTHSPYAQPSS). A compositionally biased stretch (polar residues) spans 94 to 104 (PTHSPYAQPSS). Position 99 is a phosphotyrosine (Tyr99). The tract at residues 131–310 (FQQSSTAKSA…DRKADEDHYR (180 aa)) is DNA-binding. 4 residues coordinate Zn(2+): Cys194, His197, Cys258, and Cys262. Residues 301 to 311 (DRKADEDHYRE) are compositionally biased toward basic and acidic residues. Residues 301-351 (DRKADEDHYREQQALNESSAKNGAASKRAFKQSPPAVPALGPGVKKRRHGD) are disordered. Residues 345 to 380 (KKRRHGDEDTYYLQVRGRENFEILMKLKESLELMEL) are interaction with HIPK2. An oligomerization region spans residues 345-386 (KKRRHGDEDTYYLQVRGRENFEILMKLKESLELMELVPQPLV). A PPxY motif motif is present at residues 483–487 (PPPPY). An SAM domain is found at 485-551 (PPYHADPSLV…WRGLQDLKQG (67 aa)). Residue Lys628 forms a Glycyl lysine isopeptide (Lys-Gly) (interchain with G-Cter in SUMO); in isoform Alpha linkage. Lys628 is covalently cross-linked (Glycyl lysine isopeptide (Lys-Gly) (interchain with G-Cter in SUMO2)).

It belongs to the p53 family. Found in a complex with p53/TP53 and CABLES1. The C-terminal oligomerization domain binds to the ABL1 tyrosine kinase SH3 domain. Interacts with HECW2. Isoforms Alpha and Beta interact with HIPK2. Isoform Alpha interacts with RANBP9. Interacts with WWOX. Isoform Beta interacts homotypically and with p53, whereas isoform Alpha does not. Interacts (via SAM domain) with FBXO45 (via B30.2/SPRY domain). Interacts with YAP1 (phosphorylated form). Interacts with HCK (via SH3 domain); this inhibits TP73 activity and degradation. It depends on Zn(2+) as a cofactor. In terms of processing, isoform Alpha (but not isoform Beta) is sumoylated on Lys-628, which potentiates proteasomal degradation but does not affect transcriptional activity. Polyubiquitinated by RCHY1/PIRH2; leading to its degradation by the proteasome.

It localises to the nucleus. The protein resides in the cytoplasm. Its function is as follows. Participates in the apoptotic response to DNA damage. May be a tumor suppressor protein. Is an activator of FOXJ1 expression, essential for the positive regulation of lung ciliated cell differentiation. This chain is Tumor protein p73 (TP73), found in Chlorocebus aethiops (Green monkey).